A 237-amino-acid chain; its full sequence is Protein GrpE (237 aa).

Disordered stretches follow at residues 1–52 (MSGD…RLQQ) and 200–237 (KVSMGPGPQSGASPSSAQSNDDSTATFQGEADPAEPGV). The span at 27–40 (ASMNSDEGQPSAQS) shows a compositional bias: polar residues. The segment covering 204 to 218 (GPGPQSGASPSSAQS) has biased composition (low complexity).

The protein belongs to the GrpE family. Homodimer.

It localises to the cytoplasm. Functionally, participates actively in the response to hyperosmotic and heat shock by preventing the aggregation of stress-denatured proteins, in association with DnaK and GrpE. It is the nucleotide exchange factor for DnaK and may function as a thermosensor. Unfolded proteins bind initially to DnaJ; upon interaction with the DnaJ-bound protein, DnaK hydrolyzes its bound ATP, resulting in the formation of a stable complex. GrpE releases ADP from DnaK; ATP binding to DnaK triggers the release of the substrate protein, thus completing the reaction cycle. Several rounds of ATP-dependent interactions between DnaJ, DnaK and GrpE are required for fully efficient folding. The protein is Protein GrpE of Prochlorococcus marinus (strain MIT 9303).